Consider the following 84-residue polypeptide: MTDKIRTLQGRVVSDKMEKSIVVAIERKVKHPLYGKFIKRTTKLHVHDENNECGIGDVVEIRETRPLSKTKSWTLVRVVEKAIL.

Belongs to the universal ribosomal protein uS17 family. As to quaternary structure, part of the 30S ribosomal subunit.

Functionally, one of the primary rRNA binding proteins, it binds specifically to the 5'-end of 16S ribosomal RNA. This chain is Small ribosomal subunit protein uS17, found in Photorhabdus laumondii subsp. laumondii (strain DSM 15139 / CIP 105565 / TT01) (Photorhabdus luminescens subsp. laumondii).